The following is a 201-amino-acid chain: uncharacterized protein (201 aa).

This is an uncharacterized protein from Lepidoptera (butterflies and moths).